The sequence spans 416 residues: Phosphoglycerate kinase (416 aa).

(2R)-3-phosphoglycerate-binding residues include valine 23, aspartate 24, phenylalanine 25, asparagine 26, asparagine 38, arginine 39, serine 62, histidine 63, glycine 65, arginine 66, leucine 121, arginine 122, histidine 169, and arginine 170. Glycine 213 is a binding site for ADP. Glycine 213 is a CDP binding site. AMP contacts are provided by alanine 214 and lysine 215. ATP is bound by residues alanine 214 and lysine 215. Alanine 214 is a Mg(2+) binding site. Aspartate 218 is a binding site for CDP. Aspartate 218 is a binding site for Mg(2+). Residue lysine 219 participates in AMP binding. Lysine 219 is an ATP binding site. Glycine 237 is an ADP binding site. Glycine 237 is a CDP binding site. 2 residues coordinate AMP: glycine 238 and glycine 312. ATP is bound by residues glycine 238 and glycine 312. 2 residues coordinate CDP: glycine 337 and phenylalanine 342. An ADP-binding site is contributed by phenylalanine 342. An AMP-binding site is contributed by glutamate 343. A Mg(2+)-binding site is contributed by aspartate 374. An ATP-binding site is contributed by threonine 375.

Belongs to the phosphoglycerate kinase family. Monomer. It depends on Mg(2+) as a cofactor.

The catalysed reaction is (2R)-3-phosphoglycerate + ATP = (2R)-3-phospho-glyceroyl phosphate + ADP. Its pathway is carbohydrate degradation; glycolysis; pyruvate from D-glyceraldehyde 3-phosphate: step 2/5. In Plasmodium falciparum (isolate 3D7), this protein is Phosphoglycerate kinase (PGK).